A 110-amino-acid chain; its full sequence is Large ribosomal subunit protein uL22 (110 aa).

The protein belongs to the universal ribosomal protein uL22 family. In terms of assembly, part of the 50S ribosomal subunit.

In terms of biological role, this protein binds specifically to 23S rRNA; its binding is stimulated by other ribosomal proteins, e.g. L4, L17, and L20. It is important during the early stages of 50S assembly. It makes multiple contacts with different domains of the 23S rRNA in the assembled 50S subunit and ribosome. Its function is as follows. The globular domain of the protein is located near the polypeptide exit tunnel on the outside of the subunit, while an extended beta-hairpin is found that lines the wall of the exit tunnel in the center of the 70S ribosome. The sequence is that of Large ribosomal subunit protein uL22 from Nitrosococcus oceani (strain ATCC 19707 / BCRC 17464 / JCM 30415 / NCIMB 11848 / C-107).